The primary structure comprises 191 residues: Zinc finger protein GIS2 (191 aa).

The C2H2-type zinc finger occupies 55–77; it reads FKCHYCFRNFPTSQALGGHQNAH.

Expressed in inflorescence meristems, floral meristems and stem epidermis.

It is found in the nucleus. Functionally, probable transcription factor required for the initiation of inflorescence trichomes in response to gibberellin and cytokinin. Is not involved in the regulation of trichome branching. Is functionally equivalent to ZFP8. The sequence is that of Zinc finger protein GIS2 (GIS2) from Arabidopsis thaliana (Mouse-ear cress).